Consider the following 176-residue polypeptide: Oxaleimides biosynthesis cluster protein N (176 aa).

4 helical membrane-spanning segments follow: residues 5-25 (LLVV…PLIT), 71-91 (VWTG…LNLF), 104-124 (FLYG…PKML), and 155-175 (FWIV…EGLK).

The protein localises to the membrane. Its pathway is secondary metabolite biosynthesis. Functionally, part of the gene cluster that mediates the biosynthesis of oxaleimides, cytotoxic compounds containing an unusual disubstituted succinimide moiety. The first step of the pathway is provided by the HR-PKS poxF that serves in a new mode of collaborative biosynthesis with the PKS-NRPS poxE, by providing the olefin containing amino acid substrate via the synthesis of an ACP-bound dec-4-enoate. The cytochrome P450 monooxygenase poxM-catalyzed oxidation at the alpha-position creates the enzyme-bound 2-hydroxydec-4-enoyl-ACP thioester, which may be prone to spontaneous hydrolysis to yield 2-hydroxydec-4-enoic acid due to increased electrophilicity of the carbonyl. 2-hydroxydec-4-enoic acid can then be further oxidized by poxM to yield the alpha-ketoacid 2-oxodec-4-enoicacid, which is reductively aminated by the aminotransferase poxL to yield (S,E)-2-aminodec-4-enoic acid. The Hybrid PKS-NRPS synthetase poxE then performs condensation between the octaketide product of its PKS modules and the amino group of (S,E)-2-aminodec-4-enoic acid which is activated and incorporated by the adenylation domain. The resulting aminoacyl product can be cyclized by the Diels-Alderase PoxQ and reductively released by the reductive (R) domain of poxE to yield an aldehyde intermediate. The released aldehyde is then substrate for a Knoevenagel condensation by the hydrolyase poxO followed by an oxidation at the 5-position of the pyrrolidone ring. The presence of the olefin from the amino acid building block allows for migration of the substituted allyl group to occur. This allylic transposition reaction takes place in a conjugate addition, semipinacol-like fashion to yield a succinimide intermediate. Iterative two-electron oxidations of the C7 methyl of the succinimide intermediate to the carboxylic acid can be catalyzed by one of two remaining cytochrome P450 monooxygenasess poxC or poxD to yield oxaleimide A. Subsequent oxidation yields the maleimide scaffold oxaleimide I. Both oxaleimide A and oxaleimide I can undergo oxidative modifications in the decalin ring to yield the series of products oxaleimides B to H. The chain is Oxaleimides biosynthesis cluster protein N from Penicillium oxalicum (strain 114-2 / CGMCC 5302) (Penicillium decumbens).